The sequence spans 564 residues: Hsp70-Hsp90 organising protein (564 aa).

TPR repeat units follow at residues 7–40, 42–74, and 76–108; these read AQRLKELGNKCFQEGKYEEAVKYFSDAITNDPLD, VLYSNLSGAFASLGRFYEALESANKCISIKKDW, and KGYIRKGCAEHGLRQLSNAEKTYLEGLKIDPNN. Residues 197 to 239 are a coiled coil; that stretch reads EGNDAEERQRQQREEEERRKKKEEEERKKKEEEEMKKQNRTPE. The disordered stretch occupies residues 199 to 247; sequence NDAEERQRQQREEEERRKKKEEEERKKKEEEEMKKQNRTPEQIQGDEHK. Basic and acidic residues predominate over residues 201–233; it reads AEERQRQQREEEERRKKKEEEERKKKEEEEMKK. TPR repeat units lie at residues 243-276, 278-310, 318-351, 378-411, 413-445, and 446-479; these read GDEHKLKGNEFYKQKKFDEALKEYEEAIQINPND, MYHYNKAAVHIEMKNYDKAVETCLYAIENRYNF, AKLYNRLAISYINMKKYDLAIEAYRKSLVEDNNR, AEEHKNKGNEYFKNNDFPNAKKEYDEAIRRNPND, KLYSNRAAALTKLIEYPSALEDVMKAIELDPTF, and VKAYSRKGNLHFFMKDYYKALQAYNKGLELDPNN. In terms of domain architecture, STI1 spans 513–552; it reads DPEIQQIISDPQFQIILQKLNENPNSISEYIKDPKIFNGL.

In terms of assembly, monomer. Homodimer. Forms a complex composed of HOP and chaperones HSP70 and HSP90; the interaction is stronger in the absence of ATP. Interacts (via TPR 1, 2, 3, 7, 8 and 9 repeats) with HSP70 (via C-terminus); the interaction is direct and is stronger in the absence of ATP. Interacts (via TPR 4, 5 and 6 repeats) with HSP90 (via C-terminus); the interaction is direct.

Its subcellular location is the cytoplasm. Functionally, acts as a co-chaperone and mediates the association of the chaperones HSP70 and HSP90 probably facilitating substrate transfer from HSP70 to HSP90. Stimulates HSP70 ATPase activity and, in contrast, inhibits HSP90 ATPase activity. This chain is Hsp70-Hsp90 organising protein, found in Plasmodium falciparum (isolate 3D7).